The chain runs to 465 residues: Glucose-1-phosphate adenylyltransferase (465 aa).

Residues Gly164, 181 to 182 (EK), and Ser199 each bind alpha-D-glucose 1-phosphate.

The protein belongs to the bacterial/plant glucose-1-phosphate adenylyltransferase family. In terms of assembly, homotetramer.

It catalyses the reaction alpha-D-glucose 1-phosphate + ATP + H(+) = ADP-alpha-D-glucose + diphosphate. Its pathway is glycan biosynthesis; glycogen biosynthesis. In terms of biological role, involved in the biosynthesis of ADP-glucose, a building block required for the elongation reactions to produce glycogen. Catalyzes the reaction between ATP and alpha-D-glucose 1-phosphate (G1P) to produce pyrophosphate and ADP-Glc. This is Glucose-1-phosphate adenylyltransferase from Arthrobacter sp. (strain FB24).